A 279-amino-acid polypeptide reads, in one-letter code: Energy-coupling factor transporter ATP-binding protein EcfA1 (279 aa).

The 235-residue stretch at 6–240 folds into the ABC transporter domain; it reads ISVDHLTYQY…GTQLVEMGLD (235 aa). 40–47 contacts ATP; sequence GHNGSGKS.

The protein belongs to the ABC transporter superfamily. Energy-coupling factor EcfA family. As to quaternary structure, forms a stable energy-coupling factor (ECF) transporter complex composed of 2 membrane-embedded substrate-binding proteins (S component), 2 ATP-binding proteins (A component) and 2 transmembrane proteins (T component).

It localises to the cell membrane. In terms of biological role, ATP-binding (A) component of a common energy-coupling factor (ECF) ABC-transporter complex. Unlike classic ABC transporters this ECF transporter provides the energy necessary to transport a number of different substrates. This Levilactobacillus brevis (strain ATCC 367 / BCRC 12310 / CIP 105137 / JCM 1170 / LMG 11437 / NCIMB 947 / NCTC 947) (Lactobacillus brevis) protein is Energy-coupling factor transporter ATP-binding protein EcfA1.